A 51-amino-acid chain; its full sequence is Cytochrome b559 subunit beta (51 aa).

Residues 26 to 42 form a helical membrane-spanning segment; the sequence is WLAVHALTVPTIFFLGA. Histidine 30 provides a ligand contact to heme.

It belongs to the PsbE/PsbF family. As to quaternary structure, heterodimer of an alpha subunit and a beta subunit. PSII is composed of 1 copy each of membrane proteins PsbA, PsbB, PsbC, PsbD, PsbE, PsbF, PsbH, PsbI, PsbJ, PsbK, PsbL, PsbM, PsbT, PsbX, Psb30/Ycf12, peripheral proteins PsbO, CyanoQ (PsbQ), PsbU, PsbV and a large number of cofactors. It forms dimeric complexes. Requires heme b as cofactor.

The protein resides in the cell inner membrane. Its function is as follows. This b-type cytochrome is tightly associated with the reaction center of photosystem II (PSII). PSII is a light-driven water:plastoquinone oxidoreductase that uses light energy to abstract electrons from H(2)O, generating O(2) and a proton gradient subsequently used for ATP formation. It consists of a core antenna complex that captures photons, and an electron transfer chain that converts photonic excitation into a charge separation. This chain is Cytochrome b559 subunit beta, found in Gloeobacter violaceus (strain ATCC 29082 / PCC 7421).